A 422-amino-acid chain; its full sequence is Glycine amidinotransferase, mitochondrial (422 aa).

The N-terminal 37 residues, 1–37 (MLRVRCLRGGSRGAEAVHYIGSMLRKSFVGWVQRSFQ), are a transit peptide targeting the mitochondrion. Catalysis depends on residues Asp-253 and His-302. The active-site Amidino-cysteine intermediate is Cys-406.

Belongs to the amidinotransferase family. In terms of assembly, homodimer. Ubiquitously expressed in adult tissues, with highest levels in muscle and intermediate levels in eye, heart, liver, stomach and testis. In stage 28 embryos, expression is higher in the dorsal and ventral parts of the trunk than in the head. In middle gastrulae, expression is highest around the yolk plug, while in stage 15 and tailbud stage embryos, expression is largely restricted to the region around the presumptive notochord and gut.

The protein resides in the mitochondrion inner membrane. It catalyses the reaction L-arginine + glycine = guanidinoacetate + L-ornithine. It participates in amine and polyamine biosynthesis; creatine biosynthesis; creatine from L-arginine and glycine: step 1/2. In terms of biological role, catalyzes the biosynthesis of guanidinoacetate, the immediate precursor of creatine. Creatine plays a vital role in energy metabolism in muscle tissues. May play a role in embryonic and central nervous system development. The polypeptide is Glycine amidinotransferase, mitochondrial (Xenopus laevis (African clawed frog)).